We begin with the raw amino-acid sequence, 866 residues long: Dynamin-2 (866 aa).

The Dynamin-type G domain occupies H28 to P294. The G1 motif stretch occupies residues G38 to S45. GDP is bound by residues S41, G43, K44, S45, S46, R59, and G60. A G2 motif region spans residues V64–R66. The G3 motif stretch occupies residues D136–G139. A G4 motif region spans residues T205–D208. Positions 206, 208, and 211 each coordinate GDP. Residue Y231 is modified to Phosphotyrosine. Positions V235 to S238 are G5 motif. GDP is bound by residues N236, R237, and Q239. An N6-acetyllysine modification is found at K299. The PH domain maps to Q515–V621. The residue at position 593 (Y593) is a Phosphotyrosine. K594 is subject to N6-acetyllysine. The region spanning V649–V740 is the GED domain. A disordered region spans residues T737 to D866. Position 751 is a phosphothreonine (T751). The segment covering W752–P763 has biased composition (polar residues). A Phosphoserine; by CDK1 modification is found at S760. Pro residues-rich tracts occupy residues T784–V794, P802–H811, and S822–P851.

Belongs to the TRAFAC class dynamin-like GTPase superfamily. Dynamin/Fzo/YdjA family. In terms of assembly, oligomerizes into a helical polymer that self-assembles around the vesicle membrane, when associated to the menbrane through lipid binding. Interacts with SHANK1 and SHANK2. Interacts with SNX9. Interacts (via C-terminal proline-rich domain (PRD)) with SNX18 (via SH3 domain); this interaction regulates ATG9A and ATG16L1 trafficking from recycling endosomes to sites of autophagosome formation. Interacts with SNX33 (via SH3 domain). Interacts with MYO1E (via SH3 domain). Interacts with PSTPIP1 (via SH3 domain). Interacts with CTNND2. Interacts (via C-terminal proline-rich domain (PRD)) with BIN1 (via SH3 domain); this interaction allows the recruitment of DNM2 to the membrane tubules and inhibits self-assembly-stimulated GTPase activity on the membrane. Interacts with GABARAP, GABARAPL1 and GABARAPL2. Interacts with MAP1LC3B (the lipidate and non-lipidated LC3 form); this interaction mediates recycling endosome scission leading to autophagosome release. Interacts with ITSN1. Interacts with MYOF. Interacts (via C-terminal proline-rich domain (PRD)) with SH3BP4 (via SH3 domain); this interaction controls the GTPase activity and is prevented by EGFR-induced tyrosine phosphorylation of either DNM2 or SH3BP4. May interact with PIK3C3. May be a component of a complex composed of RAB5A (in GDP-bound form), DYN2 and PIK3C3. Interacts with SDC4; this interaction is markedly enhanced at focal ahesion site upon induction of focal adhesions and stress-fiber formation. Interacts with ACTN1. Interacts with CTTN; this interaction stimulates the intrinsic GTPase activity of DNM2 and stabilizes the association of DNM2 and actin filaments; in addition this interaction is stimulated by ligand binding to the receptor, leading to the recruitment of the DNM2-CTTN complex to the sequestered receptor-ligand complex to its internalization. Interacts with NOSTRIN (via SH3 domain); this interaction allows the recruitment of NOS3 to dynamin-positive structures. Interacts with TUBG1; this interaction may participate in centrosome cohesion. Phosphorylation at Ser-844 by GSK3-alpha relieves the inhibition of BIN1 and promotes endocytosis. Phosphorylation at Ser-760 by CDK1 is greatly increased upon mitotic entry. It regulates cytokinesis downstream of calcineurin, and does not affect clathrin-mediated endocytosis. Dephosphorylated by calcineurin/PP2 during cytokinesis in a Ca(2+)- and calmodulin-dependent manner. Phosphorylated on tyrosine residues by EGFR and after activation of SRC.

The protein resides in the cytoplasm. It is found in the cytoskeleton. It localises to the cytoplasmic vesicle. The protein localises to the clathrin-coated vesicle. Its subcellular location is the cell projection. The protein resides in the uropodium. It is found in the endosome. It localises to the microtubule organizing center. The protein localises to the centrosome. Its subcellular location is the centriole. The protein resides in the recycling endosome. It is found in the phagocytic cup. It localises to the phagosome membrane. The protein localises to the podosome. Its subcellular location is the cell junction. The protein resides in the postsynaptic density. It is found in the synapse. It localises to the synaptosome. The protein localises to the midbody. Its subcellular location is the membrane. The protein resides in the clathrin-coated pit. The enzyme catalyses GTP + H2O = GDP + phosphate + H(+). Functionally, catalyzes the hydrolysis of GTP and utilizes this energy to mediate vesicle scission at plasma membrane during endocytosis and filament remodeling at many actin structures during organization of the actin cytoskeleton. Plays an important role in vesicular trafficking processes, namely clathrin-mediated endocytosis (CME), exocytic and clathrin-coated vesicle from the trans-Golgi network, and PDGF stimulated macropinocytosis. During vesicular trafficking process, associates to the membrane, through lipid binding, and self-assembles into ring-like structure through oligomerization to form a helical polymer around the vesicle membrane and leading to vesicle scission. Plays a role in organization of the actin cytoskeleton by mediating arrangement of stress fibers and actin bundles in podocytes. During organization of the actin cytoskeleton, self-assembles into ring-like structure that directly bundles actin filaments to form typical membrane tubules decorated with dynamin spiral polymers. Self-assembly increases GTPase activity and the GTP hydrolysis causes the rapid depolymerization of dynamin spiral polymers, and results in dispersion of actin bundles. Remodels, through its interaction with CTTN, bundled actin filaments in a GTPase-dependent manner and plays a role in orchestrating the global actomyosin cytoskeleton. The interaction with CTTN stabilizes the interaction of DNM2 and actin filaments and stimulates the intrinsic GTPase activity that results in actin filament-barbed ends and increases the sensitivity of filaments in bundles to the actin depolymerizing factor, CFL1. Plays a role in the autophagy process, by participating in the formation of ATG9A vesicles destined for the autophagosomes through its interaction with SNX18, by mediating recycling endosome scission leading to autophagosome release through MAP1LC3B interaction. Also regulates maturation of apoptotic cell corpse-containing phagosomes by recruiting PIK3C3 to the phagosome membrane. Also plays a role in cytokinesis. May participate in centrosome cohesion through its interaction with TUBG1. Plays a role in the regulation of neuron morphology, axon growth and formation of neuronal growth cones. Involved in membrane tubulation. This is Dynamin-2 from Bos taurus (Bovine).